A 586-amino-acid chain; its full sequence is Frizzled-10-A (586 aa).

A signal peptide spans 1-26 (MDVSGVTGLLRGTALLLVLAAALCSA). Topologically, residues 27–230 (ISSINPDRSG…DVYWSKDDKK (204 aa)) are extracellular. In terms of domain architecture, FZ spans 35 to 156 (SGDGRCQAIE…NDPNYLCMEA (122 aa)). 5 disulfide bridges follow: cysteine 40/cysteine 101, cysteine 48/cysteine 94, cysteine 85/cysteine 123, cysteine 112/cysteine 153, and cysteine 116/cysteine 140. N-linked (GlcNAc...) asparagine glycosylation is present at asparagine 54. N-linked (GlcNAc...) asparagine glycosylation occurs at asparagine 159. Residues 161 to 199 (TDETPRGSSMLPPIFRPQRPSSGHEIYPKDPTSRSSCEN) are disordered. The chain crosses the membrane as a helical span at residues 231-251 (FAFIWIAIWSILCFFSSAFTV). The Cytoplasmic segment spans residues 252–267 (LTFLVDPLRFKYPERP). A helical membrane pass occupies residues 268 to 288 (IIFLSMCYCVYSVGYIIRLFA). At 289–315 (GADSIACDRDSGQLYVIQEGLESTGCT) the chain is on the extracellular side. Residues 316 to 336 (IVFLILYYFGMASSLWWVILT) traverse the membrane as a helical segment. The Cytoplasmic portion of the chain corresponds to 337 to 356 (LTWFLAAGKKWGHEAIEANS). The helical transmembrane segment at 357–377 (SYFHLAAWAIPAVKTIMILVM) threads the bilayer. Residues 378-401 (RRVAGDELTGVCYVGSMDVNALTG) lie on the Extracellular side of the membrane. A helical transmembrane segment spans residues 402–422 (FVLIPLACYLIIGTSFILSGF). Topologically, residues 423-448 (VALFHIRRVMKTGGENTDKLEKLMVR) are cytoplasmic. Residues 449–469 (IGVFSVLYTVPATCVIACYFY) traverse the membrane as a helical segment. Residues 470-507 (ERLNMDFWKILATQDKCKMDSQTKTLDCTMTSSIPAVE) lie on the Extracellular side of the membrane. The chain crosses the membrane as a helical span at residues 508–528 (IFMVKIFMLLVVGITSGMWIW). Residues 529–586 (TSKTVQSWQNVFSKRLKKRNRSKPASVITSAGIYKKPQHPPKVHHGKYESALQSPTCV) are Cytoplasmic-facing. Residues 531–536 (KTVQSW) carry the Lys-Thr-X-X-X-Trp motif, mediates interaction with the PDZ domain of Dvl family members motif. The segment at 563-586 (KKPQHPPKVHHGKYESALQSPTCV) is disordered. Basic residues predominate over residues 564–573 (KPQHPPKVHH). A PDZ-binding motif is present at residues 584–586 (TCV).

Belongs to the G-protein coupled receptor Fz/Smo family. As to expression, expressed in liver, lung, brain, testis, stomach, kidney, eye, skeletal muscle and skin.

Its subcellular location is the cell membrane. Its function is as follows. Receptor for Wnt proteins. Most of frizzled receptors are coupled to the beta-catenin canonical signaling pathway, which leads to the activation of disheveled proteins, inhibition of GSK-3 kinase, nuclear accumulation of beta-catenin and activation of Wnt target genes. A second signaling pathway involving PKC and calcium fluxes has been seen for some family members, but it is not yet clear if it represents a distinct pathway or if it can be integrated in the canonical pathway, as PKC seems to be required for Wnt-mediated inactivation of GSK-3 kinase. Both pathways seem to involve interactions with G-proteins. May be involved in transduction and intercellular transmission of polarity information during tissue morphogenesis and/or in differentiated tissues. Activated by Wnt8. Could have an antagonizing activity in the morphogenesis during development. The sequence is that of Frizzled-10-A (fzd10-a) from Xenopus laevis (African clawed frog).